Consider the following 245-residue polypeptide: MASLGVNIDHIANVREARKTFEPDPVKMVLLAELGGADGITVHLREDRRHIQDRDLNLLKETVHTRLNLEMAATEEMTSIALNLKPDMVTLVPEKREEVTTEGGLDVIKNKNKLKEIIQRLSGEDIPVSLFVDPVQAQLENCAEVKAAWIELHTGKYAITKNKARDLELSILKENTAKAKSYGLRVNAGHGLTYQNVEPIAAIEGIEELNIGHTIISRALSVGLSQAVKEMKSLIINPRKDNFLL.

N7 lines the 3-amino-2-oxopropyl phosphate pocket. 9–10 contributes to the 1-deoxy-D-xylulose 5-phosphate binding site; the sequence is DH. R18 is a 3-amino-2-oxopropyl phosphate binding site. H43 functions as the Proton acceptor in the catalytic mechanism. The 1-deoxy-D-xylulose 5-phosphate site is built by R45 and H50. E70 (proton acceptor) is an active-site residue. Residue T100 participates in 1-deoxy-D-xylulose 5-phosphate binding. H190 (proton donor) is an active-site residue. Residues G191 and 212–213 contribute to the 3-amino-2-oxopropyl phosphate site; that span reads GH.

This sequence belongs to the PNP synthase family. In terms of assembly, homooctamer; tetramer of dimers.

The protein resides in the cytoplasm. The catalysed reaction is 3-amino-2-oxopropyl phosphate + 1-deoxy-D-xylulose 5-phosphate = pyridoxine 5'-phosphate + phosphate + 2 H2O + H(+). Its pathway is cofactor biosynthesis; pyridoxine 5'-phosphate biosynthesis; pyridoxine 5'-phosphate from D-erythrose 4-phosphate: step 5/5. Its function is as follows. Catalyzes the complicated ring closure reaction between the two acyclic compounds 1-deoxy-D-xylulose-5-phosphate (DXP) and 3-amino-2-oxopropyl phosphate (1-amino-acetone-3-phosphate or AAP) to form pyridoxine 5'-phosphate (PNP) and inorganic phosphate. The chain is Pyridoxine 5'-phosphate synthase from Prochlorococcus marinus (strain NATL1A).